The chain runs to 273 residues: Dermonecrotic toxin LapSicTox-alphaIB1ai (273 aa).

Histidine 5 is an active-site residue. 2 residues coordinate Mg(2+): glutamate 25 and aspartate 27. Residue histidine 41 is the Nucleophile of the active site. 2 disulfides stabilise this stretch: cysteine 45–cysteine 51 and cysteine 47–cysteine 190. Mg(2+) is bound at residue aspartate 85. Asparagine 250 is a glycosylation site (N-linked (GlcNAc...) asparagine).

The protein belongs to the arthropod phospholipase D family. Class II subfamily. The cofactor is Mg(2+). In terms of tissue distribution, expressed by the venom gland.

It is found in the secreted. It carries out the reaction an N-(acyl)-sphingosylphosphocholine = an N-(acyl)-sphingosyl-1,3-cyclic phosphate + choline. It catalyses the reaction an N-(acyl)-sphingosylphosphoethanolamine = an N-(acyl)-sphingosyl-1,3-cyclic phosphate + ethanolamine. The catalysed reaction is a 1-acyl-sn-glycero-3-phosphocholine = a 1-acyl-sn-glycero-2,3-cyclic phosphate + choline. The enzyme catalyses a 1-acyl-sn-glycero-3-phosphoethanolamine = a 1-acyl-sn-glycero-2,3-cyclic phosphate + ethanolamine. In terms of biological role, dermonecrotic toxins cleave the phosphodiester linkage between the phosphate and headgroup of certain phospholipids (sphingolipid and lysolipid substrates), forming an alcohol (often choline) and a cyclic phosphate. This toxin acts on sphingomyelin (SM). It may also act on ceramide phosphoethanolamine (CPE), lysophosphatidylcholine (LPC) and lysophosphatidylethanolamine (LPE), but not on lysophosphatidylserine (LPS), and lysophosphatidylglycerol (LPG). It acts by transphosphatidylation, releasing exclusively cyclic phosphate products as second products. Induces dermonecrosis, hemolysis, increased vascular permeability, edema, inflammatory response, and platelet aggregation. The polypeptide is Dermonecrotic toxin LapSicTox-alphaIB1ai (Loxosceles apachea (Apache recluse spider)).